A 210-amino-acid polypeptide reads, in one-letter code: Large ribosomal subunit protein uL3 (210 aa).

Residues 125-151 (RHGQSRGPMSHGSRYHRRPGSMGPVAP) are disordered.

It belongs to the universal ribosomal protein uL3 family. As to quaternary structure, part of the 50S ribosomal subunit. Forms a cluster with proteins L14 and L19.

In terms of biological role, one of the primary rRNA binding proteins, it binds directly near the 3'-end of the 23S rRNA, where it nucleates assembly of the 50S subunit. The chain is Large ribosomal subunit protein uL3 from Bacillus cereus (strain Q1).